We begin with the raw amino-acid sequence, 578 residues long: Rhamnogalacturonate lyase (578 aa).

The signal sequence occupies residues 1 to 27 (MHMNKPLQAWRTPLLTLIFVLPLTATG).

The protein belongs to the polysaccharide lyase 4 family.

It is found in the secreted. The catalysed reaction is Endotype eliminative cleavage of L-alpha-rhamnopyranosyl-(1-&gt;4)-alpha-D-galactopyranosyluronic acid bonds of rhamnogalacturonan I domains in ramified hairy regions of pectin leaving L-rhamnopyranose at the reducing end and 4-deoxy-4,5-unsaturated D-galactopyranosyluronic acid at the non-reducing end.. Functionally, degrades the rhamnogalacturonan I (RG-I) backbone of pectin. Is required for the full virulence of E.chrysanthemi strain 3937 as it is involved in rotting of plant tissue. The sequence is that of Rhamnogalacturonate lyase (rhiE) from Dickeya dadantii (strain 3937) (Erwinia chrysanthemi (strain 3937)).